Reading from the N-terminus, the 610-residue chain is Cytosolic 5'-nucleotidase 1B (610 aa).

Disordered regions lie at residues 1–34 (MSQT…DKTG) and 101–277 (GSQE…DEDD). Positions 9–34 (KKNEPGMRSSKESLEAEKRKESDKTG) are enriched in basic and acidic residues. Positions 119-132 (SQWSRISRSPSTKA) are enriched in polar residues. Residues 148–166 (PSSSTSSRTPSTSPSLHDS) are compositionally biased toward low complexity. Residues 167 to 183 (SPPPLSGQPSLQPPASP) are compositionally biased toward pro residues. A compositionally biased stretch (polar residues) spans 236–265 (SRTSPTEWKSSSQRRGIYPASTQLDRNSLS). Asp467 serves as the catalytic Nucleophile.

This sequence belongs to the 5'-nucleotidase type 3 family. Mg(2+) is required as a cofactor. In terms of tissue distribution, highly expressed in testis, placenta and pancreas. Detected at lower levels in heart, kidney, liver and lung.

Its subcellular location is the cytoplasm. It carries out the reaction a ribonucleoside 5'-phosphate + H2O = a ribonucleoside + phosphate. It catalyses the reaction AMP + H2O = adenosine + phosphate. Activated by ADP. Functionally, catalyzes the hydrolysis of nucleotide monophosphates, releasing inorganic phosphate and the corresponding nucleoside, AMP is the major substrate. In Homo sapiens (Human), this protein is Cytosolic 5'-nucleotidase 1B (NT5C1B).